A 522-amino-acid polypeptide reads, in one-letter code: 4-chlorobenzoate--CoA ligase (522 aa).

ATP contacts are provided by residues 161-169 (TSGTTGLPK), 300-305 (DIYGTT), and asparagine 410.

This sequence belongs to the ATP-dependent AMP-binding enzyme family. As to quaternary structure, homodimer. It depends on Mg(2+) as a cofactor.

It catalyses the reaction 4-chlorobenzoate + ATP + CoA = 4-chlorobenzoyl-CoA + AMP + diphosphate. Its pathway is xenobiotic degradation; 4-chlorobenzoate degradation; 4-hydroxybenzoate from 4-chlorobenzoate: step 2/3. Functionally, catalyzes the formation of chlorobenzoyl-CoA via a 2 step reaction. First 4-chlorobenzoate is adenylated by ATP, followed by acyl transfer from the 4-chlorobenzoyl-AMP intermediate to CoA. Benzoate, 4-bromobenzoate, 4-iodobenzoate and 4-fluorobenzoate also act as substrates. Inactive towards 4-nitrobenzoate. The chain is 4-chlorobenzoate--CoA ligase from Arthrobacter sp.